A 216-amino-acid polypeptide reads, in one-letter code: Cobalt-zinc-cadmium resistance protein CzcN (216 aa).

3 helical membrane passes run 27–47 (IGVW…GHSR), 50–70 (GTWV…LATV), and 116–136 (ESLA…PAVI).

To A.xylosoxydans NccN.

Its subcellular location is the cell inner membrane. Component of the CZC cation-efflux system that confers resistance to cobalt, zinc and cadmium. The protein is Cobalt-zinc-cadmium resistance protein CzcN (czcN) of Cupriavidus metallidurans (strain ATCC 43123 / DSM 2839 / NBRC 102507 / CH34) (Ralstonia metallidurans).